The primary structure comprises 205 residues: Nucleoside triphosphate pyrophosphatase (205 aa).

Asp76 functions as the Proton acceptor in the catalytic mechanism.

This sequence belongs to the Maf family. Requires a divalent metal cation as cofactor.

Its subcellular location is the cytoplasm. It carries out the reaction a ribonucleoside 5'-triphosphate + H2O = a ribonucleoside 5'-phosphate + diphosphate + H(+). The catalysed reaction is a 2'-deoxyribonucleoside 5'-triphosphate + H2O = a 2'-deoxyribonucleoside 5'-phosphate + diphosphate + H(+). Functionally, nucleoside triphosphate pyrophosphatase. May have a dual role in cell division arrest and in preventing the incorporation of modified nucleotides into cellular nucleic acids. In Orientia tsutsugamushi (strain Boryong) (Rickettsia tsutsugamushi), this protein is Nucleoside triphosphate pyrophosphatase.